Reading from the N-terminus, the 431-residue chain is Islet cell autoantigen 1-like protein (431 aa).

The 204-residue stretch at alanine 44–glutamate 247 folds into the AH domain. Disordered regions lie at residues glutamate 295–serine 316 and cysteine 351–serine 372. A compositionally biased stretch (basic and acidic residues) spans arginine 301–serine 316. Positions threonine 356–serine 372 are enriched in polar residues.

The sequence is that of Islet cell autoantigen 1-like protein (Ica1l) from Mus musculus (Mouse).